The following is a 725-amino-acid chain: MHPEPSEPATGGAAELDCAQEPGVEESAGDHGSAGRGGCKEEINDPKEICVGSSDTSYHSQQKQSGDNGSGGHFAHPREDREDRGPRMTKSSLQKLCKQHKLYITPALNDTLYLHFKGFDRIENLEEYTGLRCLWLQSNGIQKIENLEAQTELRCLFLQMNLLRKIENLEPLQKLDALNLSNNYIKTIENLSCLPVLNTLQMAHNHLETVEDIQHLQECLRLCVLDLSHNKLSDPEILSILESMPDLRVLNLMGNPVIRQIPNYRRTVTVRLKHLTYLDDRPVFPKDRACAEAWARGGYAAEKEERQQWESRERKKITDSIEALAMIKQRAEERKRQRESQERGEMTSSDDGENVPASAEGKEEPPGDRETRQKMELFVKESFEAKDELCPEKPSGEEPPVEAKREDGGPEPEGTLPAETLLLSSPVEVKGEDGDGEPEGTLPAEAPPPPPPVEVKGEDGDQEPEGTLPAETLLLSPPVKVKGEDGDREPEGTLPAEAPPPPPLGAAREEPTPQAVATEGVFVTELDGTRTEDLETIRLETKETFCIDDLPDLEDDDETGKSLEDQNMCFPKIEVISSLSDDSDPELDYTSLPVLENLPTDTLSNIFAVSKDTSKAARVPFTDIFKKEAKRDLEIRKQDTKSPRPLIQELSDEDPSGQLLMPPTCQRDAAPLTSSGDRDSDFLAASSPVPTESAATPPETCVGVAQPSQALPTWDLTAFPAPKAS.

The disordered stretch occupies residues 1–91 (MHPEPSEPAT…EDRGPRMTKS (91 aa)). A compositionally biased stretch (basic and acidic residues) spans 38–48 (GCKEEINDPKE). A compositionally biased stretch (polar residues) spans 53–67 (SSDTSYHSQQKQSGD). Over residues 76-86 (HPREDREDRGP) the composition is skewed to basic and acidic residues. LRR repeat units follow at residues 107–129 (ALNDTLYLHFKGFDRIENLEEYT), 130–151 (GLRCLWLQSNGIQKIENLEAQT), 152–173 (ELRCLFLQMNLLRKIENLEPLQ), 174–195 (KLDALNLSNNYIKTIENLSCLP), 196–217 (VLNTLQMAHNHLETVEDIQHLQ), and 221–242 (RLCVLDLSHNKLSDPEILSILE). In terms of domain architecture, LRRCT spans 256-294 (PVIRQIPNYRRTVTVRLKHLTYLDDRPVFPKDRACAEAW). Residues 330–345 (RAEERKRQRESQERGE) show a composition bias toward basic and acidic residues. The segment at 330–513 (RAEERKRQRE…LGAAREEPTP (184 aa)) is disordered. At Ser358 the chain carries Phosphoserine. Composition is skewed to basic and acidic residues over residues 360–408 (EGKE…REDG) and 481–491 (VKGEDGDREPE). Thr559 bears the Phosphothreonine mark. Ser562 and Ser583 each carry phosphoserine. The segment covering 632–642 (DLEIRKQDTKS) has biased composition (basic and acidic residues). Residues 632 to 703 (DLEIRKQDTK…AATPPETCVG (72 aa)) form a disordered region.

It belongs to the DNAAF1 family. As to expression, mainly expressed in trachea and testis.

It is found in the cell projection. Its subcellular location is the cilium. It localises to the cytoplasm. The protein localises to the cytoskeleton. The protein resides in the spindle pole. Cilium-specific protein required for the stability of the ciliary architecture. Plays a role in cytoplasmic preassembly of dynein arms. Involved in regulation of microtubule-based cilia and actin-based brush border microvilli. The protein is Dynein axonemal assembly factor 1 (DNAAF1) of Homo sapiens (Human).